Here is a 322-residue protein sequence, read N- to C-terminus: Transaldolase (322 aa).

K136 (schiff-base intermediate with substrate) is an active-site residue.

It belongs to the transaldolase family. Type 1 subfamily. As to quaternary structure, homodimer.

It is found in the cytoplasm. It catalyses the reaction D-sedoheptulose 7-phosphate + D-glyceraldehyde 3-phosphate = D-erythrose 4-phosphate + beta-D-fructose 6-phosphate. It functions in the pathway carbohydrate degradation; pentose phosphate pathway; D-glyceraldehyde 3-phosphate and beta-D-fructose 6-phosphate from D-ribose 5-phosphate and D-xylulose 5-phosphate (non-oxidative stage): step 2/3. Its function is as follows. Transaldolase is important for the balance of metabolites in the pentose-phosphate pathway. In Xanthomonas euvesicatoria pv. vesicatoria (strain 85-10) (Xanthomonas campestris pv. vesicatoria), this protein is Transaldolase.